A 965-amino-acid polypeptide reads, in one-letter code: Glycine dehydrogenase (decarboxylating) (965 aa).

An N6-(pyridoxal phosphate)lysine modification is found at Lys711.

Belongs to the GcvP family. As to quaternary structure, the glycine cleavage system is composed of four proteins: P, T, L and H. Pyridoxal 5'-phosphate serves as cofactor.

The catalysed reaction is N(6)-[(R)-lipoyl]-L-lysyl-[glycine-cleavage complex H protein] + glycine + H(+) = N(6)-[(R)-S(8)-aminomethyldihydrolipoyl]-L-lysyl-[glycine-cleavage complex H protein] + CO2. Functionally, the glycine cleavage system catalyzes the degradation of glycine. The P protein binds the alpha-amino group of glycine through its pyridoxal phosphate cofactor; CO(2) is released and the remaining methylamine moiety is then transferred to the lipoamide cofactor of the H protein. In Psychrobacter cryohalolentis (strain ATCC BAA-1226 / DSM 17306 / VKM B-2378 / K5), this protein is Glycine dehydrogenase (decarboxylating).